A 640-amino-acid polypeptide reads, in one-letter code: Arogenate dehydrogenase 1, chloroplastic (640 aa).

The transit peptide at 1 to 18 (MAETLITKPPLSLSFTSL) directs the protein to the chloroplast. 2 consecutive Prephenate/arogenate dehydrogenase domains span residues 53 to 334 (LRIA…GEND) and 365 to 640 (LKIG…LLTS).

This sequence belongs to the prephenate/arogenate dehydrogenase family. As to expression, expressed in roots, stems, leaves, flowers, siliques and seeds. More abundant in seeds.

The protein resides in the plastid. Its subcellular location is the chloroplast. The catalysed reaction is L-arogenate + NADP(+) = L-tyrosine + CO2 + NADPH. Its pathway is amino-acid biosynthesis; L-tyrosine biosynthesis; L-tyrosine from L-arogenate (NADP(+) route): step 1/1. Its function is as follows. Involved in the biosynthesis of tyrosine. Has no prephenate dehydrogenase activity. In Arabidopsis thaliana (Mouse-ear cress), this protein is Arogenate dehydrogenase 1, chloroplastic (TYRAAT1).